A 463-amino-acid chain; its full sequence is Probable diacyglycerol O-acyltransferase tgs1 (463 aa).

Residue Met-1 is modified to N-acetylmethionine. His-137 functions as the Proton acceptor in the catalytic mechanism.

The protein belongs to the long-chain O-acyltransferase family.

It carries out the reaction an acyl-CoA + a 1,2-diacyl-sn-glycerol = a triacyl-sn-glycerol + CoA. The enzyme catalyses di-(9Z)-octadecenoylglycerol + (9Z)-octadecenoyl-CoA = 1,2,3-tri-(9Z-octadecenoyl)-glycerol + CoA. It functions in the pathway glycerolipid metabolism; triacylglycerol biosynthesis. Functionally, catalyzes the terminal and only committed step in triacylglycerol synthesis by using diacylglycerol and fatty acyl CoA as substrates. Required for storage lipid synthesis. Upon expression in E.coli functions as a triacylglycerol synthase, making triacylglycerol (TG) from diolein and long-chain fatty acyl-CoA. Prefers C(26:0)-CoA over C(18:1)-CoA. TG synthesis activity increases in M.tuberculosis upon oxygen depletion and NO treatment, with concomitant accumulation of TG in inclusion bodies. As disruption of the gene encoding this protein obviates TG synthesis this seems to be the major enzyme involved in production of TG. Has no wax synthase activity to produce wax esters. This Mycobacterium tuberculosis (strain ATCC 25618 / H37Rv) protein is Probable diacyglycerol O-acyltransferase tgs1 (tgs1).